Reading from the N-terminus, the 249-residue chain is Type I iodothyronine deiodinase (249 aa).

Residues 1–12 (MGLPRPGLWLKR) are Extracellular-facing. The helical; Signal-anchor for type III membrane protein transmembrane segment at 13 to 33 (LWVLVQVAVEVAVGKVLMTLF) threads the bilayer. Topologically, residues 34-249 (PERVKQNILA…VRAVLEELHS (216 aa)) are cytoplasmic. Sec126 is an active-site residue. A non-standard amino acid (selenocysteine) is located at residue Sec126.

This sequence belongs to the iodothyronine deiodinase family. In terms of assembly, predominantly monomer. Can form homodimers but homodimerization is not essential for enzyme activity.

The protein localises to the cell membrane. The protein resides in the endoplasmic reticulum membrane. It localises to the basolateral cell membrane. The catalysed reaction is 3,3',5-triiodo-L-thyronine + iodide + A + H(+) = L-thyroxine + AH2. It catalyses the reaction 3,3',5'-triiodo-L-thyronine + iodide + A + H(+) = L-thyroxine + AH2. It carries out the reaction 3,3'-diiodo-L-thyronine + iodide + A + H(+) = 3,3',5'-triiodo-L-thyronine + AH2. The enzyme catalyses 3,3'-diiodo-L-thyronine + iodide + A + H(+) = 3,3',5-triiodo-L-thyronine + AH2. The catalysed reaction is 3'-iodo-L-thyronine + iodide + A + H(+) = 3',5'-diiodo-L-thyronine + AH2. It catalyses the reaction 3-iodo-L-thyronine + iodide + A + H(+) = 3,5-diiodo-L-thyronine + AH2. It carries out the reaction 3-iodo-L-thyronine + iodide + A + H(+) = 3,3'-diiodo-L-thyronine + AH2. The enzyme catalyses 3,3'-diiodothyronamine + iodide + A + H(+) = 3,3',5'-triiodothyronamine + AH2. The catalysed reaction is 3'-iodothyronamine + iodide + A + H(+) = 3',5'-diiodothyronamine + AH2. It catalyses the reaction 3-iodothyronamine + iodide + A + H(+) = 3,3'-diiodothyronamine + AH2. It carries out the reaction 3,3'-diiodothyronamine + iodide + A + H(+) = 3,3',5-triiodothyronamine + AH2. The enzyme catalyses 3-iodothyronamine + iodide + A + H(+) = 3,5-diiodothyronamine + AH2. The catalysed reaction is 3,3'-diiodo-L-thyronine sulfate + iodide + A + H(+) = 3,3',5'-triiodo-L-thyronine sulfate + AH2. It catalyses the reaction 3,3',5'-triiodo-L-thyronine sulfate + iodide + A + H(+) = L-thyroxine sulfate + AH2. It carries out the reaction 3,3'-diiodo-L-thyronine sulfate + iodide + A + H(+) = 3,3',5-triiodo-L-thyronine sulfate + AH2. Functionally, plays a crucial role in the metabolism of thyroid hormones (TH) and has specific roles in TH activation and inactivation by deiodination. Catalyzes the deiodination of L-thyroxine (T4) to 3,5,3'-triiodothyronine (T3) via outer-ring deiodination (ORD) and of T4 to 3,3',5'-triiodothyronine (rT3) via inner-ring deiodination (IRD). Catalyzes the deiodiantion of rT3 to 3,3'-diiodothyronine (3,3'-T2) and 3',5'-diiodothyronine (3',5'-T2) to 3'-monoiodothyronine (3'-T1) via ORD. Catalyzes the deiodination of T3 to 3,3'-T2, 3,5-diiodothyronine (3,5-T2) to 3-monoiodothyronine (3-T1) and 3,3'-T2 to 3-T1 via IRD. Catalyzes the phenolic ring deiodinations of 3,3',5'-triiodothyronamine, 3',5'-diiodothyronamine and 3,3'-diiodothyronamine as well as tyrosyl ring deiodinations of 3,5,3'-triiodothyronamine and 3,5-diiodothyronamine. Catalyzes the deiodination of L-thyroxine sulfate and 3,3',5-triiodo-L-thyronine sulfate via IRD and of 3,3',5'-triiodo-L-thyronine sulfate via ORD. The chain is Type I iodothyronine deiodinase (DIO1) from Oryctolagus cuniculus (Rabbit).